Here is a 423-residue protein sequence, read N- to C-terminus: Serine--tRNA ligase (423 aa).

231–233 serves as a coordination point for L-serine; it reads TAE. 262–264 is an ATP binding site; sequence RSE. L-serine is bound at residue Glu285. 349–352 is a binding site for ATP; it reads EISS. An L-serine-binding site is contributed by Ser384.

Belongs to the class-II aminoacyl-tRNA synthetase family. Type-1 seryl-tRNA synthetase subfamily. Homodimer. The tRNA molecule binds across the dimer.

It localises to the cytoplasm. It catalyses the reaction tRNA(Ser) + L-serine + ATP = L-seryl-tRNA(Ser) + AMP + diphosphate + H(+). The enzyme catalyses tRNA(Sec) + L-serine + ATP = L-seryl-tRNA(Sec) + AMP + diphosphate + H(+). It functions in the pathway aminoacyl-tRNA biosynthesis; selenocysteinyl-tRNA(Sec) biosynthesis; L-seryl-tRNA(Sec) from L-serine and tRNA(Sec): step 1/1. In terms of biological role, catalyzes the attachment of serine to tRNA(Ser). Is also able to aminoacylate tRNA(Sec) with serine, to form the misacylated tRNA L-seryl-tRNA(Sec), which will be further converted into selenocysteinyl-tRNA(Sec). This is Serine--tRNA ligase from Lactococcus lactis subsp. lactis (strain IL1403) (Streptococcus lactis).